A 639-amino-acid chain; its full sequence is ATP-dependent zinc metalloprotease FtsH (639 aa).

At 1–15 (MDNEKQASPPPAAPP) the chain is on the cytoplasmic side. A helical transmembrane segment spans residues 16-36 (LNWRYLLWIILLGIFLISWLG). The Periplasmic segment spans residues 37–123 (NAGRQAGDEI…VQAKSEEPSL (87 aa)). The chain crosses the membrane as a helical span at residues 124–144 (WMQAIIGILPWFLILGLIFYV). Topologically, residues 145–639 (SYRMQQRMMG…HNEAVATGAG (495 aa)) are cytoplasmic. 221 to 228 (GRPGTGKT) contributes to the ATP binding site. His-442 contributes to the Zn(2+) binding site. Residue Glu-443 is part of the active site. 2 residues coordinate Zn(2+): His-446 and Asp-518.

In the central section; belongs to the AAA ATPase family. It in the C-terminal section; belongs to the peptidase M41 family. As to quaternary structure, homohexamer. Zn(2+) is required as a cofactor.

The protein resides in the cell inner membrane. Its function is as follows. Acts as a processive, ATP-dependent zinc metallopeptidase for both cytoplasmic and membrane proteins. Plays a role in the quality control of integral membrane proteins. This is ATP-dependent zinc metalloprotease FtsH from Nitrosococcus oceani (strain ATCC 19707 / BCRC 17464 / JCM 30415 / NCIMB 11848 / C-107).